The chain runs to 224 residues: MTNLLLQGVGMTSLRTRERLIQRLRDQGVTNLRVLDIMLNTPRHLFLDEALAHRAYEDTALPIGHGQTLSQPYIVARMTELLLGAAGKLNKVLEVGTGSGYQTSLLAQLVPEVYTVERIKPLQDKARERLHQLGLRNIRYRHADGGFGWPDMGAYDGILSTAAPQVVPDELLKQLAPGGVLVIPVGGREQQLHLIIRDTEDTEKFVTQILEPVKFVPFLSGTAR.

Residue Ser70 is part of the active site.

The protein belongs to the methyltransferase superfamily. L-isoaspartyl/D-aspartyl protein methyltransferase family.

The protein localises to the cytoplasm. It catalyses the reaction [protein]-L-isoaspartate + S-adenosyl-L-methionine = [protein]-L-isoaspartate alpha-methyl ester + S-adenosyl-L-homocysteine. Its function is as follows. Catalyzes the methyl esterification of L-isoaspartyl residues in peptides and proteins that result from spontaneous decomposition of normal L-aspartyl and L-asparaginyl residues. It plays a role in the repair and/or degradation of damaged proteins. The protein is Protein-L-isoaspartate O-methyltransferase of Cellvibrio japonicus (strain Ueda107) (Pseudomonas fluorescens subsp. cellulosa).